A 121-amino-acid polypeptide reads, in one-letter code: Large ribosomal subunit protein bL20 (121 aa).

Belongs to the bacterial ribosomal protein bL20 family.

Its function is as follows. Binds directly to 23S ribosomal RNA and is necessary for the in vitro assembly process of the 50S ribosomal subunit. It is not involved in the protein synthesizing functions of that subunit. This chain is Large ribosomal subunit protein bL20, found in Methylorubrum extorquens (strain PA1) (Methylobacterium extorquens).